A 311-amino-acid polypeptide reads, in one-letter code: Transcription factor MafB (311 aa).

Disordered stretches follow at residues 35-78 (PLGR…PTEQ) and 150-199 (EDLA…EDRF). Over residues 54 to 76 (SVSSTPISTPCSSVPSSPSFSPT) the composition is skewed to low complexity. Basic residues predominate over residues 157 to 167 (HPHHHHHHHHQ). A compositionally biased stretch (low complexity) spans 168–194 (ASPTPSTSSSSSQQLQTSHQQHPPSSS). A basic motif region spans residues 226–251 (RLKQKRRTLKNRGYAQSCRYKRVQQK). The bZIP domain occupies 226 to 289 (RLKQKRRTLK…DAYKLKCEKL (64 aa)). The tract at residues 254–275 (LENEKTQLIQQVEQLKQEVTRL) is leucine-zipper.

This sequence belongs to the bZIP family. Maf subfamily. As to quaternary structure, homodimer or heterodimer with other bHLH-Zip transcription factors. Binds DNA as a homodimer or heterodimer. Self-associates; the interaction requires the intact MAFB leucine-zipper domain. Interacts with FOS, HOXD12 and PRRX1. In terms of tissue distribution, expressed in brain, thymus, gut, lung, mesenterium, spleen, kidney, ovary and bursa.

The protein localises to the nucleus. Acts as a transcriptional activator or repressor. Positively regulates the expression of alpha-A crystallin genes during lens fiber cell differentiation. Binds to Maf recognition elements (MARE). In Gallus gallus (Chicken), this protein is Transcription factor MafB (MAFB).